The primary structure comprises 275 residues: MSSFGYRTLTVALFALICCPGSDEKVFEVHVRPKKLAVEPKASLEVNCSTTCNQPEVGGLETSLDKILLDEQAQWKHYLVSNISHDTVLQCHFTCSGKQESMNSNVSVYQPPRQVILTLQPTLVAVGKSFTIECRVPTVEPLDSLTLFLFRGNETLHNQTFGKAAPALQEATATFNSTADREDGHRNFSCLAVLDLISRGGNIFQEHSAPKMLEIYEPVSDSQMVIIVTVVSVLLSLFVTSVLLCFIFGQHLRQQRMGTYGVRAAWRRLPQAFRP.

An N-terminal signal peptide occupies residues 1–24; that stretch reads MSSFGYRTLTVALFALICCPGSDE. Residues 25-223 lie on the Extracellular side of the membrane; that stretch reads KVFEVHVRPK…EIYEPVSDSQ (199 aa). Positions 41–98 constitute an Ig-like C2-type 1 domain; it reads KASLEVNCSTTCNQPEVGGLETSLDKILLDEQAQWKHYLVSNISHDTVLQCHFTCSGK. N47, N82, N105, N153, N158, N176, and N187 each carry an N-linked (GlcNAc...) asparagine glycan. 2 cysteine pairs are disulfide-bonded: C48-C91 and C52-C95. The Ig-like C2-type 2 domain maps to 127–197; it reads GKSFTIECRV…FSCLAVLDLI (71 aa). C134 and C190 are disulfide-bonded. The chain crosses the membrane as a helical span at residues 224–248; that stretch reads MVIIVTVVSVLLSLFVTSVLLCFIF. The Cytoplasmic segment spans residues 249–275; the sequence is GQHLRQQRMGTYGVRAAWRRLPQAFRP. A required for interaction with EZR, MSN and RDX and co-localization to microvilli region spans residues 251 to 275; sequence HLRQQRMGTYGVRAAWRRLPQAFRP.

The protein belongs to the immunoglobulin superfamily. ICAM family. In terms of assembly, interacts with RDX, EZR and MSN.

Its subcellular location is the membrane. It localises to the cell projection. It is found in the microvillus. Its function is as follows. ICAM proteins are ligands for the leukocyte adhesion protein LFA-1 (integrin alpha-L/beta-2). ICAM2 may play a role in lymphocyte recirculation by blocking LFA-1-dependent cell adhesion. It mediates adhesive interactions important for antigen-specific immune response, NK-cell mediated clearance, lymphocyte recirculation, and other cellular interactions important for immune response and surveillance. The polypeptide is Intercellular adhesion molecule 2 (ICAM2) (Gorilla gorilla gorilla (Western lowland gorilla)).